A 178-amino-acid polypeptide reads, in one-letter code: 3-hydroxyacyl-[acyl-carrier-protein] dehydratase FabZ (178 aa).

The active site involves His54.

It belongs to the thioester dehydratase family. FabZ subfamily.

The protein resides in the cytoplasm. It catalyses the reaction a (3R)-hydroxyacyl-[ACP] = a (2E)-enoyl-[ACP] + H2O. In terms of biological role, involved in unsaturated fatty acids biosynthesis. Catalyzes the dehydration of short chain beta-hydroxyacyl-ACPs and long chain saturated and unsaturated beta-hydroxyacyl-ACPs. This Yersinia enterocolitica protein is 3-hydroxyacyl-[acyl-carrier-protein] dehydratase FabZ.